The chain runs to 366 residues: 3-isopropylmalate dehydrogenase (366 aa).

78-91 (GPKWEDLPSHLQPE) contributes to the NAD(+) binding site. Substrate is bound by residues Arg99, Arg109, Arg138, and Asp227. Mg(2+)-binding residues include Asp227, Asp251, and Asp255. 285-297 (GSAPDIKGKNIAN) lines the NAD(+) pocket.

This sequence belongs to the isocitrate and isopropylmalate dehydrogenases family. LeuB type 1 subfamily. Homodimer. Mg(2+) is required as a cofactor. Requires Mn(2+) as cofactor.

It localises to the cytoplasm. It carries out the reaction (2R,3S)-3-isopropylmalate + NAD(+) = 4-methyl-2-oxopentanoate + CO2 + NADH. It functions in the pathway amino-acid biosynthesis; L-leucine biosynthesis; L-leucine from 3-methyl-2-oxobutanoate: step 3/4. Functionally, catalyzes the oxidation of 3-carboxy-2-hydroxy-4-methylpentanoate (3-isopropylmalate) to 3-carboxy-4-methyl-2-oxopentanoate. The product decarboxylates to 4-methyl-2 oxopentanoate. In Buchnera aphidicola subsp. Baizongia pistaciae (strain Bp), this protein is 3-isopropylmalate dehydrogenase.